We begin with the raw amino-acid sequence, 485 residues long: Glucagon receptor (485 aa).

Residues 1 to 26 form the signal peptide; sequence MLLTQLHCPYLLLLLVVLSCLPKAPS. The Extracellular segment spans residues 27–137; the sequence is AQVMDFLFEK…EIEVQKGVAK (111 aa). 3 cysteine pairs are disulfide-bonded: Cys44-Cys68, Cys59-Cys101, and Cys82-Cys122. Asn47, Asn60, Asn75, and Asn79 each carry an N-linked (GlcNAc...) asparagine glycan. The chain crosses the membrane as a helical span at residues 138-162; it reads MYSSYQVMYTVGYSLSLGALLLALV. The Cytoplasmic segment spans residues 163-174; it reads ILLGLRKLHCTR. Residues 175 to 199 traverse the membrane as a helical segment; it reads NYIHGNLFASFVLKAGSVLVIDWLL. Residues 200–226 are Extracellular-facing; sequence KTRYSQKIGDDLSVSVWLSDGAVAGCR. Cys225 and Cys295 are oxidised to a cystine. Residues 227-250 form a helical membrane-spanning segment; that stretch reads VATVIMQYGIIANYCWLLVEGVYL. Residues 251–264 lie on the Cytoplasmic side of the membrane; that stretch reads YSLLSITTFSEKSF. The helical transmembrane segment at 265-286 threads the bilayer; sequence FSLYLCIGWGSPLLFVIPWVVV. Residues 287–304 lie on the Extracellular side of the membrane; it reads KCLFENVQCWTSNDNMGF. Residues 305–327 form a helical membrane-spanning segment; the sequence is WWILRIPVLLAILINFFIFVRII. At 328–351 the chain is on the cytoplasmic side; the sequence is HLLVAKLRAHQMHYADYKFRLARS. Residues 351–354 form an important for allosteric inhibitor binding region; it reads STLT. Residues 352–370 form a helical membrane-spanning segment; the sequence is TLTLIPLLGVHEVVFAFVT. The Extracellular portion of the chain corresponds to 371–382; it reads DEHAQGTLRSTK. A helical membrane pass occupies residues 383-403; it reads LFFDLFFSSFQGLLVAVLYCF. Topologically, residues 404-485 are cytoplasmic; sequence LNKEVQAELL…SLPRLADSPT (82 aa). The tract at residues 455–485 is disordered; it reads MSAGSSSGTGCEPSAKTSLASSLPRLADSPT. Positions 456-475 are enriched in polar residues; that stretch reads SAGSSSGTGCEPSAKTSLAS. Phosphoserine is present on residues Ser460 and Ser476.

It belongs to the G-protein coupled receptor 2 family. In terms of processing, ligand-binding promotes phosphorylation of serine residues in the C-terminal cytoplasmic domain. Phosphorylation is important for receptor endocytosis after ligand-binding.

Its subcellular location is the cell membrane. In terms of biological role, G-protein coupled receptor for glucagon that plays a central role in the regulation of blood glucose levels and glucose homeostasis. Regulates the rate of hepatic glucose production by promoting glycogen hydrolysis and gluconeogenesis. Plays an important role in mediating the responses to fasting. Ligand binding causes a conformation change that triggers signaling via guanine nucleotide-binding proteins (G proteins) and modulates the activity of down-stream effectors, such as adenylate cyclase. Promotes activation of adenylate cyclase. Besides, plays a role in signaling via a phosphatidylinositol-calcium second messenger system. The protein is Glucagon receptor (Gcgr) of Rattus norvegicus (Rat).